Reading from the N-terminus, the 90-residue chain is Large ribosomal subunit protein eL31 (90 aa).

This sequence belongs to the eukaryotic ribosomal protein eL31 family.

The protein is Large ribosomal subunit protein eL31 of Natronomonas pharaonis (strain ATCC 35678 / DSM 2160 / CIP 103997 / JCM 8858 / NBRC 14720 / NCIMB 2260 / Gabara) (Halobacterium pharaonis).